Consider the following 377-residue polypeptide: Nucleoside diphosphate kinase homolog 7 (377 aa).

The DM10 domain maps to 3–91 (HSERFVFIAE…YTARQLGSKK (89 aa)).

This sequence belongs to the NDK family. As to quaternary structure, component of sperm flagellar doublet microtubules. Component of the gamma-tubulin ring complex. In terms of tissue distribution, expressed in trachea multiciliated cells.

It localises to the cytoplasm. It is found in the cytoskeleton. The protein resides in the microtubule organizing center. Its subcellular location is the centrosome. The protein localises to the nucleus. It localises to the spindle. It is found in the cilium axoneme. The protein resides in the flagellum axoneme. Its subcellular location is the cell projection. The protein localises to the cilium. Possesses an intrinsic kinase activity. Displays 3'-5' exonuclease activity with a preference for single-stranded DNA. Does not seem to have nucleoside diphosphate kinase activity. Functional component of the gamma-tubulin ring complex, implicated in the regulation of the microtubule-nucleating activity of the gamma-tubulin ring complex in centrosomes, in a kinase activity-dependent manner. Part of the dynein-decorated doublet microtubules (DMTs) in cilia axoneme, which is required for motile cilia beating. The chain is Nucleoside diphosphate kinase homolog 7 (NME7) from Bos taurus (Bovine).